Reading from the N-terminus, the 498-residue chain is MEAAADLRDTALLTLKFKFNPRLGIDNPVLSLAEDQDQSDPWNLHRPRFCLLSKEEEKTFGFHLQQHLGKADHVVCRVDPGTSAQRQGLREGDRILAVNNNIVAHEDHAVVVRYIRASGPRVLLTVLAQHVHDVARVLQGSDAFLCPTLPSGVRPRLCHVVKDEGGFGFSVTHGSRGPFWLVLSAGGAAERAGVPPGARLLEVNGASVEKLTYNQLNRKLWQSGDQVTLLVAGLEVEEQCHQLGMPLAAPLAEGWALPAKPRCLNIEKGPEGFGFLLREEKGLDGRLGQFLWDVDPGLPADKAGMKAGDRLVAVAGESVDGLGHEETVSRIRAQGSCVSLIVVDPEADRFFSMVRLSPLLFLENTEIAAPPLAETKDLPVEDTVEPSGLAGSCQCFLYPGPGGGYGFRLCCVASGPCLFISQVTPGGSTARAGLQVGDTVLEVNGYPVGGDSELDRLQQLTEAEPPLCLKLGARNPQGLEAWISLESGEDWTLASELL.

4 PDZ domains span residues 49–130 (FCLL…LAQH), 157–235 (LCHV…AGLE), 263–346 (CLNI…VDPE), and 394–475 (QCFL…GARN). At Ser-329 the chain carries Phosphoserine.

As to quaternary structure, interacts with the C-terminal region of GUCY2C. Interacts with C-terminal region of SLC9A3 and the interactions decrease in response to elevated calcium ion levels. Interacts with the C-terminal region of SLC34A1. Interacts with USP2 isoform 2. Interacts (via the third PDZ domain) with SLC26A3 (via PDZ-binding motif). This interaction leads to decreased expression of SLC26A3 on the cell membrane resulting in its reduced exchanger activity. In terms of processing, phosphorylation at Ser-329 negatively regulates its interaction with SLC26A3. As to expression, expressed in kidney and small intestine. Not detected in heart, brain, spleen, lung, liver, skeletal muscle or testis.

Its subcellular location is the cell membrane. The protein resides in the cytoplasm. Its function is as follows. Acts as a regulatory protein that associates with GUCY2C and negatively modulates its heat-stable enterotoxin-mediated activation. Stimulates SLC9A3 activity in the presence of elevated calcium ions. This Mus musculus (Mouse) protein is Na(+)/H(+) exchange regulatory cofactor NHE-RF4 (Nherf4).